A 346-amino-acid polypeptide reads, in one-letter code: Olfactory receptor 13D1 (346 aa).

Over 1–57 (MYRFTDFDVSNISIYLNHVLFYTTQQAGDLEHMETRNYSAMTEFFLVGLSQYPELQL) the chain is Extracellular. An N-linked (GlcNAc...) asparagine glycan is attached at Asn37. The helical transmembrane segment at 58–78 (FLFLLCLIMYMIILLGNSLLI) threads the bilayer. At 79-86 (IITILDSR) the chain is on the cytoplasmic side. The chain crosses the membrane as a helical span at residues 87–107 (LHTPMYFFLGNLSFLDICYTS). Residues 108-131 (SSIPPMLIIFMSERKSISFIGCAL) lie on the Extracellular side of the membrane. An intrachain disulfide couples Cys129 to Cys221. Residues 132 to 152 (QMVVSLGLGSTECVLLAVMAY) form a helical membrane-spanning segment. The Cytoplasmic segment spans residues 153-171 (DHYVAICNPLRYSIIMNGV). Residues 172-192 (LYVQMAAWSWIIGCLTSLLQT) form a helical membrane-spanning segment. At 193–229 (VLTMMLPFCGNNVIDHITCEILALLKLVCSDITINVL) the chain is on the extracellular side. The chain crosses the membrane as a helical span at residues 230 to 249 (IMTVTNIVSLVILLLLIFIS). Over 250 to 269 (YVFILSSILRINCAEGRKKA) the chain is Cytoplasmic. Residues 270 to 290 (FSTCSAHSIVVILFYGSALFM) form a helical membrane-spanning segment. Residues 291 to 303 (YMKPKSKNTNTSD) lie on the Extracellular side of the membrane. Asn300 carries N-linked (GlcNAc...) asparagine glycosylation. Residues 304–324 (EIIGLSYGVVSPMLNPIIYSL) form a helical membrane-spanning segment. The Cytoplasmic segment spans residues 325 to 346 (RNKEVKEAVKKVLSRHLHLLKM).

Belongs to the G-protein coupled receptor 1 family.

Its subcellular location is the cell membrane. In terms of biological role, odorant receptor. The sequence is that of Olfactory receptor 13D1 (OR13D1) from Homo sapiens (Human).